The sequence spans 278 residues: Coiled-coil domain-containing protein 121 (278 aa).

Coiled-coil stretches lie at residues 1-30 (MTDL…REKL) and 105-243 (QAMR…LIQA). The interval 253–278 (QCLNRQDVPKTTPSLPQGTKSRINPK) is disordered.

The chain is Coiled-coil domain-containing protein 121 (CCDC121) from Homo sapiens (Human).